We begin with the raw amino-acid sequence, 411 residues long: Peptidase T (411 aa).

Residue His-79 participates in Zn(2+) binding. The active site involves Asp-81. Asp-142 is a binding site for Zn(2+). Catalysis depends on Glu-176, which acts as the Proton acceptor. Positions 177, 199, and 381 each coordinate Zn(2+).

It belongs to the peptidase M20B family. Requires Zn(2+) as cofactor.

It is found in the cytoplasm. The enzyme catalyses Release of the N-terminal residue from a tripeptide.. Functionally, cleaves the N-terminal amino acid of tripeptides. The sequence is that of Peptidase T from Geobacillus kaustophilus (strain HTA426).